Reading from the N-terminus, the 325-residue chain is Small ribosomal subunit protein RACK1 (325 aa).

WD repeat units lie at residues 13-44, 61-91, 103-133, 147-179, 191-221, 232-261, and 291-321; these read AHTD…ILWH, GHSH…RLWD, GHTK…KLWN, AHSD…KVWN, GHSG…LLWD, DAGS…KIWD, and KKVI…RVWG.

It belongs to the WD repeat G protein beta family. Ribosomal protein RACK1 subfamily.

In terms of biological role, plays a role in hormone-mediated cell division. In Medicago sativa (Alfalfa), this protein is Small ribosomal subunit protein RACK1 (GB1).